We begin with the raw amino-acid sequence, 302 residues long: 4-hydroxy-tetrahydrodipicolinate synthase (302 aa).

Residue T55 participates in pyruvate binding. Y144 serves as the catalytic Proton donor/acceptor. K172 functions as the Schiff-base intermediate with substrate in the catalytic mechanism. Residue V214 participates in pyruvate binding.

This sequence belongs to the DapA family. In terms of assembly, homotetramer; dimer of dimers.

The protein resides in the cytoplasm. It catalyses the reaction L-aspartate 4-semialdehyde + pyruvate = (2S,4S)-4-hydroxy-2,3,4,5-tetrahydrodipicolinate + H2O + H(+). Its pathway is amino-acid biosynthesis; L-lysine biosynthesis via DAP pathway; (S)-tetrahydrodipicolinate from L-aspartate: step 3/4. Its function is as follows. Catalyzes the condensation of (S)-aspartate-beta-semialdehyde [(S)-ASA] and pyruvate to 4-hydroxy-tetrahydrodipicolinate (HTPA). The sequence is that of 4-hydroxy-tetrahydrodipicolinate synthase from Prochlorococcus marinus (strain MIT 9303).